The sequence spans 132 residues: Myelin P2 protein (132 aa).

N-acetylserine is present on S2. Residues R107 and 127–129 (RIY) contribute to the (9Z)-octadecenoate site. Hexadecanoate contacts are provided by residues R107 and 127-129 (RIY).

The protein belongs to the calycin superfamily. Fatty-acid binding protein (FABP) family. Monomer.

The protein localises to the cytoplasm. In terms of biological role, may play a role in lipid transport protein in Schwann cells. May bind cholesterol. The protein is Myelin P2 protein (Pmp2) of Mus musculus (Mouse).